Here is a 285-residue protein sequence, read N- to C-terminus: uncharacterized protein (285 aa).

The region spanning Thr92–Arg199 is the Guanylate cyclase domain.

It belongs to the adenylyl cyclase class-4/guanylyl cyclase family.

This is an uncharacterized protein from Mycobacterium tuberculosis (strain CDC 1551 / Oshkosh).